We begin with the raw amino-acid sequence, 430 residues long: tRNA(Ile)-lysidine synthase (430 aa).

27–32 is a binding site for ATP; sequence SGGSDS.

The protein belongs to the tRNA(Ile)-lysidine synthase family.

The protein resides in the cytoplasm. It catalyses the reaction cytidine(34) in tRNA(Ile2) + L-lysine + ATP = lysidine(34) in tRNA(Ile2) + AMP + diphosphate + H(+). Ligates lysine onto the cytidine present at position 34 of the AUA codon-specific tRNA(Ile) that contains the anticodon CAU, in an ATP-dependent manner. Cytidine is converted to lysidine, thus changing the amino acid specificity of the tRNA from methionine to isoleucine. The protein is tRNA(Ile)-lysidine synthase of Rickettsia bellii (strain OSU 85-389).